The following is a 311-amino-acid chain: Insulin-like growth factor-binding protein 2 (311 aa).

The N-terminal stretch at 1 to 36 (MALGGVGRGGAARAAWPRLLLAALAPALALAGPALP) is a signal peptide. Residues 38–120 (VLFRCPPCTA…VQGQGTCARP (83 aa)) form the IGFBP N-terminal domain. 6 cysteine pairs are disulfide-bonded: cysteine 42–cysteine 70, cysteine 45–cysteine 72, cysteine 53–cysteine 73, cysteine 61–cysteine 76, cysteine 84–cysteine 97, and cysteine 91–cysteine 117. Disordered stretches follow at residues 112 to 168 (QGQG…PLKT) and 188 to 210 (GKVG…TGRT). Residues 209-291 (RTPCQQELDQ…APTIRGDPEC (83 aa)) enclose the Thyroglobulin type-1 domain. 3 disulfides stabilise this stretch: cysteine 212-cysteine 246, cysteine 257-cysteine 268, and cysteine 270-cysteine 291. The Cell attachment site motif lies at 286-288 (RGD).

Binds IGF2 more than IGF1.

The protein localises to the secreted. Functionally, inhibits IGF-mediated growth and developmental rates. IGF-binding proteins prolong the half-life of the IGFs and have been shown to either inhibit or stimulate the growth promoting effects of the IGFs on cell culture. They alter the interaction of IGFs with their cell surface receptors. The chain is Insulin-like growth factor-binding protein 2 (IGFBP2) from Gallus gallus (Chicken).